We begin with the raw amino-acid sequence, 91 residues long: Small ribosomal subunit protein uS19 (91 aa).

The protein belongs to the universal ribosomal protein uS19 family.

Its function is as follows. Protein S19 forms a complex with S13 that binds strongly to the 16S ribosomal RNA. The polypeptide is Small ribosomal subunit protein uS19 (Lactiplantibacillus plantarum (strain ATCC BAA-793 / NCIMB 8826 / WCFS1) (Lactobacillus plantarum)).